The sequence spans 154 residues: UPF0127 protein TSIB_1463 (154 aa).

It belongs to the UPF0127 family.

This Thermococcus sibiricus (strain DSM 12597 / MM 739) protein is UPF0127 protein TSIB_1463.